The following is a 443-amino-acid chain: COP9 signalosome complex subunit 2 (443 aa).

Residues 254–416 (AHTDFFEAFK…QLLELDHQKR (163 aa)) enclose the PCI domain.

The protein belongs to the CSN2 family. In terms of assembly, component of the CSN complex, probably composed of cops1, cops2, cops3, cops4, cops5, cops6, cops7, cops8 and cops9.

It is found in the cytoplasm. The protein resides in the nucleus. Essential component of the COP9 signalosome complex (CSN), a complex involved in various cellular and developmental processes. The CSN complex is an essential regulator of the ubiquitin (Ubl) conjugation pathway by mediating the deneddylation of the cullin subunits of E3 ligase complexes, leading to modify the Ubl ligase activity. This chain is COP9 signalosome complex subunit 2 (cops2), found in Danio rerio (Zebrafish).